The following is a 158-amino-acid chain: NADH-quinone oxidoreductase subunit B (158 aa).

Cys-37, Cys-38, Cys-102, and Cys-132 together coordinate [4Fe-4S] cluster.

This sequence belongs to the complex I 20 kDa subunit family. NDH-1 is composed of 14 different subunits. Subunits NuoB, C, D, E, F, and G constitute the peripheral sector of the complex. The cofactor is [4Fe-4S] cluster.

The protein resides in the cell inner membrane. It carries out the reaction a quinone + NADH + 5 H(+)(in) = a quinol + NAD(+) + 4 H(+)(out). NDH-1 shuttles electrons from NADH, via FMN and iron-sulfur (Fe-S) centers, to quinones in the respiratory chain. Couples the redox reaction to proton translocation (for every two electrons transferred, four hydrogen ions are translocated across the cytoplasmic membrane), and thus conserves the redox energy in a proton gradient. In Bordetella avium (strain 197N), this protein is NADH-quinone oxidoreductase subunit B.